Here is a 971-residue protein sequence, read N- to C-terminus: Kinesin-like protein KIN-6 (971 aa).

2 disordered regions span residues 1–44 and 93–121; these read MEEK…SSLA and TTTTKSRPRNVWPQNPSKKNNAKENRNPE. Positions 29–39 are enriched in low complexity; the sequence is ATPFTTTTKPP. Residues 76–460 form the Kinesin motor domain; that stretch reads SLKIFLRIKP…LRQASPYMKI (385 aa). Residue 202 to 209 participates in ATP binding; it reads GPSGSGKT. The span at 700 to 709 shows a compositional bias: basic and acidic residues; it reads RREAGSEESS. Disordered regions lie at residues 700–856 and 872–917; these read RREA…TEEM and KTTN…RLQP. A compositionally biased stretch (polar residues) spans 768-783; the sequence is QSVNSEENVGIPSTIT. A compositionally biased stretch (basic and acidic residues) spans 785–797; sequence VEAEVTDFQRDQN. The span at 809 to 827 shows a compositional bias: polar residues; it reads EVSQDCINSGLSNVQTKSA. Positions 831-842 are enriched in basic and acidic residues; it reads RFPDSEKQERNR. Over residues 903–915 the composition is skewed to basic residues; that stretch reads KKQKNGQKPKRRL.

It belongs to the TRAFAC class myosin-kinesin ATPase superfamily. Kinesin family. KIN-6 subfamily.

This Arabidopsis thaliana (Mouse-ear cress) protein is Kinesin-like protein KIN-6.